The following is a 239-amino-acid chain: MRPSGRKTDQMRKVSFERNFSKHAEGSCLVKFGDTHVLCTASLEEKTPPWLRNTGKGWVTAEYGMLPRATGERMKREAAAGKQGGRTQEIQRLIGRSLRAVVDLQALGEKQITLDCDVIQADGGTRTASITGGWIALYDCLKWMESRNMIKVDRVLKDHVAAISCGVFANQAVIDLDYLEDSSAETDANFVMTGAGGIVEIQGTAEGTPFSEEEFSSLMRLAKNGIGELVALQKQAIAG.

Phosphate is bound by residues arginine 86 and 124 to 126; that span reads GTR.

This sequence belongs to the RNase PH family. In terms of assembly, homohexameric ring arranged as a trimer of dimers.

It catalyses the reaction tRNA(n+1) + phosphate = tRNA(n) + a ribonucleoside 5'-diphosphate. Functionally, phosphorolytic 3'-5' exoribonuclease that plays an important role in tRNA 3'-end maturation. Removes nucleotide residues following the 3'-CCA terminus of tRNAs; can also add nucleotides to the ends of RNA molecules by using nucleoside diphosphates as substrates, but this may not be physiologically important. Probably plays a role in initiation of 16S rRNA degradation (leading to ribosome degradation) during starvation. The chain is Ribonuclease PH from Rhizobium etli (strain ATCC 51251 / DSM 11541 / JCM 21823 / NBRC 15573 / CFN 42).